Here is a 1044-residue protein sequence, read N- to C-terminus: Carbamoyl phosphate synthase large chain (1044 aa).

The interval 1–398 (MPKREDISKI…ALMKAIASLD (398 aa)) is carboxyphosphate synthetic domain. Positions 129, 169, 175, 176, 208, 210, 215, 241, 242, 243, 284, and 296 each coordinate ATP. Residues 133-325 (HDFLISIGER…IARIAAKIAV (193 aa)) form the ATP-grasp 1 domain. Mg(2+) contacts are provided by Gln284, Glu296, and Asn298. Mn(2+) is bound by residues Gln284, Glu296, and Asn298. The interval 399–539 (IDLSYRLRLY…YSTYEDEDEL (141 aa)) is oligomerization domain. The interval 540–916 (PGISGFVAII…AIRKSILRDI (377 aa)) is carbamoyl phosphate synthetic domain. The region spanning 665–854 (SKRLEAMGID…WVELAVSAIM (190 aa)) is the ATP-grasp 2 domain. Positions 701, 738, 740, 745, 770, 771, 772, 773, 813, and 825 each coordinate ATP. The Mg(2+) site is built by Gln813, Glu825, and Asn827. The Mn(2+) site is built by Gln813, Glu825, and Asn827. The MGS-like domain occupies 911 to 1044 (SILRDIKSVF…IDYREISSYH (134 aa)). An allosteric domain region spans residues 916–1044 (IKSVFISVRD…IDYREISSYH (129 aa)).

This sequence belongs to the CarB family. Composed of two chains; the small (or glutamine) chain promotes the hydrolysis of glutamine to ammonia, which is used by the large (or ammonia) chain to synthesize carbamoyl phosphate. Tetramer of heterodimers (alpha,beta)4. The cofactor is Mg(2+). Mn(2+) is required as a cofactor.

It carries out the reaction hydrogencarbonate + L-glutamine + 2 ATP + H2O = carbamoyl phosphate + L-glutamate + 2 ADP + phosphate + 2 H(+). The enzyme catalyses hydrogencarbonate + NH4(+) + 2 ATP = carbamoyl phosphate + 2 ADP + phosphate + 2 H(+). Its pathway is amino-acid biosynthesis; L-arginine biosynthesis; carbamoyl phosphate from bicarbonate: step 1/1. The protein operates within pyrimidine metabolism; UMP biosynthesis via de novo pathway; (S)-dihydroorotate from bicarbonate: step 1/3. Large subunit of the glutamine-dependent carbamoyl phosphate synthetase (CPSase). CPSase catalyzes the formation of carbamoyl phosphate from the ammonia moiety of glutamine, carbonate, and phosphate donated by ATP, constituting the first step of 2 biosynthetic pathways, one leading to arginine and/or urea and the other to pyrimidine nucleotides. The large subunit (synthetase) binds the substrates ammonia (free or transferred from glutamine from the small subunit), hydrogencarbonate and ATP and carries out an ATP-coupled ligase reaction, activating hydrogencarbonate by forming carboxy phosphate which reacts with ammonia to form carbamoyl phosphate. The polypeptide is Carbamoyl phosphate synthase large chain (Thermoplasma volcanium (strain ATCC 51530 / DSM 4299 / JCM 9571 / NBRC 15438 / GSS1)).